Reading from the N-terminus, the 688-residue chain is Beta-galactosidase BglY (688 aa).

Residue R118 participates in substrate binding. C122 provides a ligand contact to Zn(2+). N156 contacts substrate. E157 acts as the Proton donor in catalysis. Zn(2+)-binding residues include C162, C164, and C167. The Nucleophile role is filled by E313. Substrate is bound by residues W321 and 361–364; that span reads EKFH.

This sequence belongs to the glycosyl hydrolase 42 family.

It catalyses the reaction Hydrolysis of terminal non-reducing beta-D-galactose residues in beta-D-galactosides.. Ca(2+), Mg(2+) and EDTA have little effect on enzyme activity at 1-10 mM. Zn(2+) at 3, 5, 7 or 10 mM inhibits activity by 20%, 30%, 40% and 65%, respectively. Its function is as follows. Hydrolyzes o-nitrophenyl-beta-D-galactopyranoside (ONPG) and p-nitrophenyl-beta-D-fucopyranoside (PNPF), but not p-nitrophenyl-beta-D-glucopyranoside (PNPG), p-nitrophenyl-beta-D-xylopyranoside (PNPX) or p-nitrophenyl-beta-D-arabinopyranoside (PNPA). Also hydrolyzes lactose, including lactose in milk. This Alicyclobacillus acidocaldarius subsp. acidocaldarius (strain ATCC 27009 / DSM 446 / BCRC 14685 / JCM 5260 / KCTC 1825 / NBRC 15652 / NCIMB 11725 / NRRL B-14509 / 104-IA) (Bacillus acidocaldarius) protein is Beta-galactosidase BglY (bglY).